The chain runs to 3010 residues: Genome polyprotein (3010 aa).

Ser-2 carries the N-acetylserine; by host modification. The segment at 2–23 (STNPKPQRKTKRNTNRRPQDVK) is interaction with STAT1. The tract at residues 2–58 (STNPKPQRKTKRNTNRRPQDVKFPGGGQIVGGVYLLPRRGPRLGVRATRKTSERSQP) is interaction with EIF2AK2/PKR. The tract at residues 2–59 (STNPKPQRKTKRNTNRRPQDVKFPGGGQIVGGVYLLPRRGPRLGVRATRKTSERSQPR) is interaction with DDX3X. The interval 2-75 (STNPKPQRKT…PKARRPEGRT (74 aa)) is disordered. The Cytoplasmic segment spans residues 2 to 168 (STNPKPQRKT…EDGVNYATGN (167 aa)). 2 consecutive short sequence motifs (nuclear localization signal) follow at residues 5 to 13 (PKPQRKTKR) and 38 to 43 (PRRGPR). Over residues 7-16 (PQRKTKRNTN) the composition is skewed to basic residues. Residues 32–47 (GGVYLLPRRGPRLGVR) are compositionally biased toward low complexity. Ser-53 bears the Phosphoserine; by host mark. 2 consecutive short sequence motifs (nuclear localization signal) follow at residues 58–64 (PRGRRQP) and 66–71 (PKARRP). The segment covering 58 to 68 (PRGRRQPIPKA) has biased composition (basic residues). Ser-99 is subject to Phosphoserine; by host. Positions 112–152 (PRRRSRNLGKVIDTLTCGFADLMGYIPLVGAPLGGAARALA) are important for endoplasmic reticulum and mitochondrial localization. Phosphoserine; by host PKA is present on Ser-116. The interaction with APOA2 stretch occupies residues 122 to 173 (VIDTLTCGFADLMGYIPLVGAPLGGAARALAHGVRVLEDGVNYATGNLPGCS). The interval 164-167 (YATG) is important for lipid droplets localization. The helical transmembrane segment at 169–189 (LPGCSFSIFLLALLSCLTIPA) threads the bilayer. A propeptide spans 178-191 (LLALLSCLTIPASA) (ER anchor for the core protein, removed in mature form by host signal peptidase). The Lumenal segment spans residues 190-358 (SAYEVRNVSG…AGAHWGVLAG (169 aa)). 3 N-linked (GlcNAc...) asparagine; by host glycosylation sites follow: Asn-196, Asn-209, and Asn-234. The interval 265-296 (LVGAAALCSAMYVGDLCGSVFLVSQLFTFSPR) is important for fusion. An N-linked (GlcNAc...) asparagine; by host glycan is attached at Asn-305. A helical membrane pass occupies residues 359–379 (LAYYSMVGNWAKVLIVMLLFA). Topologically, residues 380–725 (GVDGHTHVTG…WEYILLLFLL (346 aa)) are lumenal. Thr-385 and Thr-396 each carry an O-linked (Hex...) threonine; by host glycan. An HVR1 region spans residues 385–411 (THVTGGRVASSTQSLVSWLSQGPSQKI). O-linked (Hex...) serine; by host glycans are attached at residues Ser-401 and Ser-404. N-linked (GlcNAc...) (high mannose) asparagine; by host glycosylation is found at Asn-417, Asn-423, Asn-430, and Asn-448. 4 disulfides stabilise this stretch: Cys-429–Cys-552, Cys-452–Cys-459, Cys-486–Cys-494, and Cys-503–Cys-508. Residue Thr-473 is glycosylated (O-linked (Hex...) threonine; by host). An HVR2 region spans residues 474-482 (HDMPESSDQ). The tract at residues 480 to 493 (SDQRPYCWHYAPRP) is CD81-binding 1. An O-linked (Hex...) threonine; by host glycan is attached at Thr-518. The N-linked (GlcNAc...) (high mannose) asparagine; by host glycan is linked to Asn-532. The tract at residues 544 to 551 (PPQGNWFG) is CD81-binding 2. Asn-556 is a glycosylation site (N-linked (GlcNAc...) (high mannose) asparagine; by host). A disulfide bridge connects residues Cys-564 and Cys-569. An N-linked (GlcNAc...) (high mannose) asparagine; by host glycan is attached at Asn-576. 3 disulfides stabilise this stretch: Cys-581–Cys-585, Cys-597–Cys-620, and Cys-607–Cys-644. 2 N-linked (GlcNAc...) (high mannose) asparagine; by host glycosylation sites follow: Asn-623 and Asn-645. An intrachain disulfide couples Cys-652 to Cys-677. An EIF2AK2/eIF2-alpha phosphorylation homology domain (PePHD) region spans residues 660–671 (SELSPLLLSTTE). Residues 726 to 746 (LADARVCACLWMMLLIAQAEA) traverse the membrane as a helical segment. Residues 747–757 (TLENLVVLNAA) lie on the Lumenal side of the membrane. Residues 758-778 (SVAGAHGLLSFLVFFCAAWYI) traverse the membrane as a helical segment. At 779–781 (KGR) the chain is on the cytoplasmic side. The helical transmembrane segment at 782–803 (LVPGAAYALYGVWPLLLLLLAL) threads the bilayer. Residues 804–813 (PPRAYAMDRE) are Lumenal-facing. Residues 814-834 (MAASCGGAVFVGLVLLTLSPY) form a helical membrane-spanning segment. At 835–838 (YKVF) the chain is on the cytoplasmic side. Residues 839–859 (LARLIWWLQYFITRAEAHLQV) form a helical membrane-spanning segment. Over 860–881 (WVPPLNVRGGRDAIILLTCAVH) the chain is Lumenal. Residues 882-902 (PELIFDITKLLLAILGPLMVL) form a helical membrane-spanning segment. Residues 903-1026 (QAGITRVPYF…SFGEQGWRLL (124 aa)) form the Peptidase C18 domain. Topologically, residues 903–1657 (QAGITRVPYF…CMSADLEVVT (755 aa)) are cytoplasmic. The protease NS2-3 stretch occupies residues 904-1206 (AGITRVPYFV…PVESMETTMR (303 aa)). Cys-922 carries the S-palmitoyl cysteine; by host lipid modification. The interval 929–949 (AGGHYVQMAFMKLAALTGTYV) is interaction with host SCPS1. Residues His-952, Glu-972, and Cys-993 each act as for protease NS2 activity; shared with dimeric partner in the active site. The Peptidase S29 domain occupies 1027 to 1208 (APITAYSQQT…ESMETTMRSP (182 aa)). Catalysis depends on charge relay system; for serine protease NS3 activity residues His-1083 and Asp-1107. Zn(2+)-binding residues include Cys-1123 and Cys-1125. Residue Ser-1165 is the Charge relay system; for serine protease NS3 activity of the active site. The Zn(2+) site is built by Cys-1171 and His-1175. The Helicase ATP-binding domain occupies 1217-1369 (PAVPQTFQVA…PNIEEVALSN (153 aa)). 1230–1237 (APTGSGKS) contributes to the ATP binding site. Positions 1237 and 1317 each coordinate Mg(2+). The short motif at 1316–1319 (DECH) is the DECH box element. Residues 1486–1497 (QRRGRTGRGRSG) form an RNA-binding region. The chain crosses the membrane as a helical span at residues 1658 to 1678 (STWVLVGGVLAALAAYCLTTG). Positions 1679–1690 (SVVIVGRIILSG) are NS3-binding. Residues 1679–1805 (SVVIVGRIIL…SITSPLTTQN (127 aa)) are Cytoplasmic-facing. The chain crosses the membrane as a helical span at residues 1806-1826 (TLLFNILGGWVAAQLAPPSAA). Topologically, residues 1827–1828 (SA) are lumenal. The helical transmembrane segment at 1829–1849 (FVGAGIAGAAVGSIGLGKVLV) threads the bilayer. The glycine zipper stretch occupies residues 1833–1861 (GIAGAAVGSIGLGKVLVDILAGYGAGVAG). A topological domain (cytoplasmic) is located at residue Asp-1850. Residues 1851 to 1871 (ILAGYGAGVAGALVAFKVMSG) traverse the membrane as a helical segment. Residues 1872–1881 (EMPSTEDLVN) are Lumenal-facing. The helical transmembrane segment at 1882-1902 (LLPAILSPGALVVGVVCAAIL) threads the bilayer. Over 1903 to 1972 (RRHVGPGEGA…WINEDCSTPC (70 aa)) the chain is Cytoplasmic. S-palmitoyl cysteine; by host attachment occurs at residues Cys-1968 and Cys-1972. The stretch at 1973–2002 (SGSWLKDVWDWICTVLSDFKTWLQSKLLPR) is an intramembrane region. The segment at 1978–1998 (KDVWDWICTVLSDFKTWLQSK) is membrane-binding. Topologically, residues 2003–2989 (LPGLPFLSCQ…YHSLSRARPR (987 aa)) are cytoplasmic. The segment at 2005 to 2221 (GLPFLSCQRG…KATCTTHHDS (217 aa)) is RNA-binding. Positions 2011, 2029, 2031, and 2052 each coordinate Zn(2+). Residues 2120–2208 (EFFTEVDGVR…ASSSASQLSA (89 aa)) are FKBP8-binding. Residues 2120–2332 (EFFTEVDGVR…PIPPPRRKRT (213 aa)) are transcriptional activation. The segment at 2135–2139 (PVCKP) is interaction with non-structural protein 4A. Positions 2187–2219 (KRRLARGSPPSLASSSASQLSAPSLKATCTTHH) are disordered. The tract at residues 2189–2441 (RLARGSPPSL…PCAAEESKLP (253 aa)) is interaction with host SKP2. Ser-2194 carries the phosphoserine; by host; in p56 modification. Over residues 2194-2211 (SPPSLASSSASQLSAPSL) the composition is skewed to low complexity. A phosphoserine; by host; in p58 mark is found at Ser-2197, Ser-2201, Ser-2204, Ser-2207, and Ser-2210. ISDR stretches follow at residues 2206–2245 (LSAP…TRVE) and 2210–2249 (SLKA…SENK). The segment at 2210 to 2275 (SLKATCTTHH…REISVPAEIL (66 aa)) is EIF2AK2/PKR-binding. Residues 2249-2306 (KVVILDSFDPIRAVEDEREISVPAEILRKPRKFPPALPIWARPDYNPPLLESWKDPDY) are NS4B-binding. Positions 2322–2325 (PPIP) match the SH3-binding motif. The short motif at 2326–2334 (PPRRKRTVV) is the Nuclear localization signal element. An interaction with host IFI27 region spans residues 2332-2441 (TVVLTESTVS…PCAAEESKLP (110 aa)). Residue Lys-2350 forms a Glycyl lysine isopeptide (Lys-Gly) (interchain with G-Cter in ubiquitin) linkage. Polar residues predominate over residues 2351-2365 (TFGSSGSSAVDSGTA). The tract at residues 2351–2408 (TFGSSGSSAVDSGTATGPPDQASDDGDKGSDVESYSSMPPLEGEPGDPDLSDGSWSTV) is disordered. Positions 2354–2377 (SSGSSAVDSGTATGPPDQASDDGD) are V3. Residues Ser-2448 and Ser-2461 each carry the phosphoserine; by host modification. The region spanning 2633-2751 (PMGFSYDTRC…ICESAGTQED (119 aa)) is the RdRp catalytic domain. Positions 2639, 2737, and 2738 each coordinate Mg(2+). The helical transmembrane segment at 2990 to 3010 (WFMLCLLLLSVGVGIYLLPNR) threads the bilayer.

This sequence belongs to the hepacivirus polyprotein family. In terms of assembly, homooligomer. Interacts with E1 (via C-terminus). Interacts with the non-structural protein 5A. Interacts (via N-terminus) with host STAT1 (via SH2 domain); this interaction results in decreased STAT1 phosphorylation and ubiquitin-mediated proteasome-dependent STAT1 degradation, leading to decreased IFN-stimulated gene transcription. Interacts with host STAT3; this interaction constitutively activates STAT3. Interacts with host LTBR receptor. Interacts with host TNFRSF1A receptor and possibly induces apoptosis. Interacts with host HNRPK. Interacts with host YWHAE. Interacts with host UBE3A/E6AP. Interacts with host DDX3X. Interacts with host APOA2. Interacts with host RXRA protein. Interacts with host SP110 isoform 3/Sp110b; this interaction sequesters the transcriptional corepressor SP110 away from the nucleus. Interacts with host CREB3 nuclear transcription protein; this interaction triggers cell transformation. Interacts with host ACY3. Interacts with host C1QR1. Interacts with host RBM24; this interaction, which enhances the interaction of the mature core protein with 5'-UTR, may inhibit viral translation and favor replication. Interacts with host EIF2AK2/PKR; this interaction induces the autophosphorylation of EIF2AK2. Part of the viral assembly initiation complex composed of NS2, E1, E2, NS3, NS4A, NS5A and the mature core protein. As to quaternary structure, forms a heterodimer with envelope glycoprotein E2. Interacts with mature core protein. Interacts with protease NS2. The heterodimer E1/E2 interacts with host CLDN1; this interaction plays a role in viral entry into host cell. Interacts with host SPSB2 (via C-terminus). Part of the viral assembly initiation complex composed of NS2, E1, E2, NS3, NS4A, NS5A and the mature core protein. Interacts with host NEURL3; this interaction prevents E1 binding to glycoprotein E2. Forms a heterodimer with envelope glycoprotein E1. Interacts with host CD81 and SCARB1 receptors; these interactions play a role in viral entry into host cell. Interacts with host EIF2AK2/PKR; this interaction inhibits EIF2AK2 and probably allows the virus to evade the innate immune response. Interacts with host CD209/DC-SIGN and CLEC4M/DC-SIGNR. Interact with host SPCS1; this interaction is essential for viral particle assembly. Interacts with protease NS2. The heterodimer E1/E2 interacts with host CLDN1; this interaction plays a role in viral entry into host cell. Part of the viral assembly initiation complex composed of NS2, E1, E2, NS3, NS4A, NS5A and the mature core protein. Interacts with host SLC3A2/4F2hc; the interaction may facilitate viral entry into host cell. Interacts with human PLSCR1. In terms of assembly, homohexamer. Homoheptamer. Interacts with protease NS2. As to quaternary structure, homodimer. Interacts with host SPCS1; this interaction is essential for viral particle assembly. Interacts with envelope glycoprotein E1. Interacts with envelope glycoprotein E2. Interacts with viroporin p7. Interacts with serine protease/helicase NS3. Part of the replication complex composed of NS2, NS3, NS4A, NS4B, NS5A and the RNA-directed RNA polymerase embedded in an ER-derived membranous web. Part of the viral assembly initiation complex composed of NS2, E1, E2, NS3, NS4A, NS5A and the mature core protein. Interacts with protease NS2. Interacts with non-structural protein 4A; this interaction stabilizes the folding of NS3 serine protease. NS3-NS4A interaction is essential for NS3 activation and allows membrane anchorage of the latter. NS3/NS4A complex also prevents phosphorylation of host IRF3, thus preventing the establishment of dsRNA induced antiviral state. Interacts with host MAVS; this interaction leads to the cleavage and inhibition of host MAVS. Interacts with host TICAM1; this interaction leads to the cleavage and inhibition of host TICAM1. Interacts with host TANK-binding kinase/TBK1; this interaction results in the inhibition of the association between TBK1 and IRF3, which leads to the inhibition of IRF3 activation. Interacts with host RBM24. Part of the replication complex composed of NS2, NS3, NS4A, NS4B, NS5A and the RNA-directed RNA polymerase embedded in an ER-derived membranous web. Part of the viral assembly initiation complex composed of NS2, E1, E2, NS3, NS4A, NS5A and the mature core protein. In terms of assembly, interacts with NS3 serine protease; this interaction stabilizes the folding of NS3 serine protease. NS3-NS4A interaction is essential for NS3 activation and allows membrane anchorage of the latter. Interacts with non-structural protein 5A (via N-terminus). Part of the replication complex composed of NS2, NS3, NS4A, NS4B, NS5A and the RNA-directed RNA polymerase embedded in an ER-derived membranous web. Part of the viral assembly initiation complex composed of NS2, E1, E2, NS3, NS4A, NS5A and the mature core protein. As to quaternary structure, homomultimer. Interacts with non-structural protein NS5A. Interacts with host PLA2G4C; this interaction likely initiates the recruitment of replication complexes to lipid droplets. Interacts with host STING; this interaction disrupts the interaction between STING and TBK1 thereby suppressing the interferon signaling. Part of the replication complex composed of NS2, NS3, NS4A, NS4B, NS5A and the RNA-directed RNA polymerase embedded in an ER-derived membranous web. Monomer. Homodimer; dimerization is required for RNA-binding. Interacts with the mature core protein. Interacts (via N-terminus) with non-structural protein 4A. Interacts with non-structural protein 4B. Interacts with RNA-directed RNA polymerase. Part of the viral assembly initiation complex composed of NS2, E1, E2, NS3, NS4A, NS5A and the mature core protein. Part of the replication complex composed of NS2, NS3, NS4A, NS4B, NS5A and the RNA-directed RNA polymerase. Interacts with host GRB2. Interacts with host BIN1. Interacts with host PIK3R1. Interacts with host SRCAP. Interacts with host FKBP8. Interacts with host VAPB. Interacts with host EIF2AK2/PKR; this interaction leads to disruption of EIF2AK2 dimerization by NS5A and probably allows the virus to evade the innate immune response. Interacts (via N-terminus) with host PACSIN2 (via N-terminus); this interaction attenuates protein kinase C alpha-mediated phosphorylation of PACSIN2 by disrupting the interaction between PACSIN2 and PRKCA. Interacts (via N-terminus) with host SRC kinase (via SH2 domain). Interacts with most Src-family kinases. Interacts with host IFI27 and SKP2; promotes the ubiquitin-mediated proteasomal degradation of NS5A. Interacts with host GPS2. Interacts with host TNFRSF21; this interaction allows the modulation by the virus of JNK, p38 MAPK, STAT3, and Akt signaling pathways in a DR6-dependent manner. Interacts (via N-terminus) with host CIDEB (via N-terminus); this interaction seems to regulate the association of HCV particles with APOE. Interacts with host CHKA/Choline Kinase-alpha; CHKA bridges host PI4KA and NS5A and potentiates NS5A-stimulated PI4KA activity, which then facilitates the targeting of the ternary complex to the ER for viral replication. Interacts with host SPSB2 (via C-terminus); this interaction targets NS5A for ubiquitination and degradation. Interacts with host RAB18; this interaction may promote the association of NS5A and other replicase components with lipid droplets. Interacts (via region D2) with host PPIA/CYPA; the interaction stimulates RNA-binding ability of NS5A and is dependent on the peptidyl-prolyl cis-trans isomerase activity of PPIA/CYPA. Interacts with host TRIM14; this interaction induces the degradation of NS5A. In terms of assembly, homooligomer. Interacts with non-structural protein 5A. Interacts with host VAPB. Interacts with host PRK2/PKN2. Interacts with host HNRNPA1 and SEPT6; these interactions facilitate the viral replication. Part of the replication complex composed of NS2, NS3, NS4A, NS4B, NS5A and the RNA-directed RNA polymerase. The cofactor is Zn(2+). It depends on Mg(2+) as a cofactor. Specific enzymatic cleavages in vivo yield mature proteins. The structural proteins, core, E1, E2 and p7 are produced by proteolytic processing by host signal peptidases. The core protein is synthesized as a 23 kDa precursor which is retained in the ER membrane through the hydrophobic signal peptide. Cleavage by the signal peptidase releases the 21 kDa mature core protein. The cleavage of the core protein precursor occurs between aminoacids 176 and 188 but the exact cleavage site is not known. Some degraded forms of the core protein appear as well during the course of infection. The other proteins (p7, NS2, NS3, NS4A, NS4B, NS5A and NS5B) are cleaved by the viral proteases. Autoprocessing between NS2 and NS3 is mediated by the NS2 cysteine protease catalytic domain and regulated by the NS3 N-terminal domain. Post-translationally, phosphorylated by host PKC and PKA. In terms of processing, ubiquitinated; mediated by UBE3A and leading to core protein subsequent proteasomal degradation. Highly N-glycosylated. Post-translationally, palmitoylation is required for NS2/3 autoprocessing and E2 recruitment to membranes. In terms of processing, palmitoylated. This modification may play a role in its polymerization or in protein-protein interactions. Cleaved by host caspases which are probably activated by the viral infection. Post-translationally, ubiquitinated. Ubiquitination, most probably at Lys-2350, mediated by host IFI27 and SKP2 leads to proteasomal degradation, restricting viral infection. In terms of processing, phosphorylated on serines in a basal form termed p56. p58 is a hyperphosphorylated form of p56. p56 and p58 coexist in the cell in roughly equivalent amounts. Hyperphosphorylation is dependent on the presence of NS4A. Host CSNK1A1/CKI-alpha or RPS6KB1 kinases may be responsible for NS5A phosphorylation. Phosphorylated NS5A is involved in viral replication. Tyrosine phosphorylation is essential for the interaction with host SRC. Post-translationally, the N-terminus is phosphorylated by host PRK2/PKN2.

The protein localises to the host endoplasmic reticulum membrane. Its subcellular location is the host mitochondrion membrane. It is found in the virion. The protein resides in the host cytoplasm. It localises to the host nucleus. The protein localises to the host lipid droplet. Its subcellular location is the virion membrane. It is found in the host mitochondrion. The protein resides in the host cell membrane. It localises to the host perinuclear region. It carries out the reaction Hydrolysis of four peptide bonds in the viral precursor polyprotein, commonly with Asp or Glu in the P6 position, Cys or Thr in P1 and Ser or Ala in P1'.. The catalysed reaction is a ribonucleoside 5'-triphosphate + H2O = a ribonucleoside 5'-diphosphate + phosphate + H(+). It catalyses the reaction ATP + H2O = ADP + phosphate + H(+). The enzyme catalyses RNA(n) + a ribonucleoside 5'-triphosphate = RNA(n+1) + diphosphate. With respect to regulation, inhibited by the antiviral drug hexamethylene amiloride. Inhibition by amantadine appears to be genotype-dependent. Also inhibited by long-alkyl-chain iminosugar derivatives. Activity is up-regulated by PRK2/PKN2-mediated phosphorylation. Packages viral RNA to form a viral nucleocapsid, and promotes virion budding. Participates in the viral particle production as a result of its interaction with the non-structural protein 5A. Binds RNA and may function as a RNA chaperone to induce the RNA structural rearrangements taking place during virus replication. Modulates viral translation initiation by interacting with viral IRES and 40S ribosomal subunit. Affects various cell signaling pathways, host immunity and lipid metabolism. Prevents the establishment of cellular antiviral state by blocking the interferon-alpha/beta (IFN-alpha/beta) and IFN-gamma signaling pathways and by blocking the formation of phosphorylated STAT1 and promoting ubiquitin-mediated proteasome-dependent degradation of STAT1. Activates STAT3 leading to cellular transformation. Regulates the activity of cellular genes, including c-myc and c-fos. May repress the promoter of p53, and sequester CREB3 and SP110 isoform 3/Sp110b in the cytoplasm. Represses cell cycle negative regulating factor CDKN1A, thereby interrupting an important check point of normal cell cycle regulation. Targets transcription factors involved in the regulation of inflammatory responses and in the immune response: suppresses NF-kappa-B activation, and activates AP-1. Binds to dendritic cells (DCs) via C1QR1, resulting in down-regulation of T-lymphocytes proliferation. Alters lipid metabolism by interacting with hepatocellular proteins involved in lipid accumulation and storage. Induces up-regulation of FAS promoter activity, and thereby contributes to the increased triglyceride accumulation in hepatocytes (steatosis). Its function is as follows. Forms a heterodimer with envelope glycoprotein E2, which mediates virus attachment to the host cell, virion internalization through clathrin-dependent endocytosis and fusion with host membrane. Fusion with the host cell is most likely mediated by both E1 and E2, through conformational rearrangements of the heterodimer required for fusion rather than a classical class II fusion mechanism. E1/E2 heterodimer binds host apolipoproteins such as APOB and APOE thereby forming a lipo-viro-particle (LVP). APOE associated to the LVP allows the initial virus attachment to cell surface receptors such as the heparan sulfate proteoglycans (HSPGs), syndecan-1 (SDC1), syndecan-1 (SDC2), the low-density lipoprotein receptor (LDLR) and scavenger receptor class B type I (SCARB1). The cholesterol transfer activity of SCARB1 allows E2 exposure and binding of E2 to SCARB1 and the tetraspanin CD81. E1/E2 heterodimer binding on CD81 activates the epithelial growth factor receptor (EGFR) signaling pathway. Diffusion of the complex E1-E2-EGFR-SCARB1-CD81 to the cell lateral membrane allows further interaction with Claudin 1 (CLDN1) and occludin (OCLN) to finally trigger HCV entry. Functionally, forms a heterodimer with envelope glycoprotein E1, which mediates virus attachment to the host cell, virion internalization through clathrin-dependent endocytosis and fusion with host membrane. Fusion with the host cell is most likely mediated by both E1 and E2, through conformational rearrangements of the heterodimer required for fusion rather than a classical class II fusion mechanism. The interaction between envelope glycoprotein E2 and host apolipoprotein E/APOE allows the proper assembly, maturation and infectivity of the viral particles. This interaction is probably promoted via the up-regulation of cellular autophagy by the virus. E1/E2 heterodimer binds host apolipoproteins such as APOB and APOE thereby forming a lipo-viro-particle (LVP). APOE associated to the LVP allows the initial virus attachment to cell surface receptors such as the heparan sulfate proteoglycans (HSPGs), syndecan-1 (SDC1), syndecan-1 (SDC2), the low-density lipoprotein receptor (LDLR) and scavenger receptor class B type I (SCARB1). The cholesterol transfer activity of SCARB1 allows E2 exposure and binding of E2 to SCARB1 and the tetraspanin CD81. E1/E2 heterodimer binding on CD81 activates the epithelial growth factor receptor (EGFR) signaling pathway. Diffusion of the complex E1-E2-EGFR-SCARB1-CD81 to the cell lateral membrane allows further interaction with Claudin 1 (CLDN1) and occludin (OCLN) to finally trigger HCV entry. Inhibits host EIF2AK2/PKR activation, preventing the establishment of an antiviral state. Viral ligand for CD209/DC-SIGN and CLEC4M/DC-SIGNR, which are respectively found on dendritic cells (DCs), and on liver sinusoidal endothelial cells and macrophage-like cells of lymph node sinuses. These interactions allow the capture of circulating HCV particles by these cells and subsequent facilitated transmission to permissive cells such as hepatocytes and lymphocyte subpopulations. The interaction between E2 and host amino acid transporter complex formed by SLC3A2 and SLC7A5/LAT1 may facilitate viral entry into host cell. In terms of biological role, ion channel protein that acts as a viroporin and plays an essential role in the assembly, envelopment and secretion of viral particles. Regulates the host cell secretory pathway, which induces the intracellular retention of viral glycoproteins and favors assembly of viral particles. Creates a pore in acidic organelles and releases Ca(2+) and H(+) in the cytoplasm of infected cells, leading to a productive viral infection. High levels of cytoplasmic Ca(2+) may trigger membrane trafficking and transport of viral ER-associated proteins to viroplasms, sites of viral genome replication. This ionic imbalance induces the assembly of the inflammasome complex, which triggers the maturation of pro-IL-1beta into IL-1beta through the action of caspase-1. Targets also host mitochondria and induces mitochondrial depolarization. In addition of its role as a viroporin, acts as a lipid raft adhesion factor. Cysteine protease required for the proteolytic auto-cleavage between the non-structural proteins NS2 and NS3. The N-terminus of NS3 is required for the function of NS2 protease (active region NS2-3). Promotes the initiation of viral particle assembly by mediating the interaction between structural and non-structural proteins. Its function is as follows. Displays three enzymatic activities: serine protease with a chymotrypsin-like fold, NTPase and RNA helicase. NS3 serine protease, in association with NS4A, is responsible for the cleavages of NS3-NS4A, NS4A-NS4B, NS4B-NS5A and NS5A-NS5B. The NS3/NS4A complex prevents phosphorylation of host IRF3, thus preventing the establishment of dsRNA induced antiviral state. The NS3/NS4A complex induces host amino acid transporter component SLC3A2, thus contributing to HCV propagation. NS3 RNA helicase binds to RNA and unwinds both dsDNA and dsRNA in the 3' to 5' direction, and likely resolves RNA complicated stable secondary structures in the template strand. Binds a single ATP and catalyzes the unzipping of a single base pair of dsRNA. Inhibits host antiviral proteins TBK1 and IRF3 thereby preventing the establishment of an antiviral state. Cleaves host MAVS/CARDIF thereby preventing the establishment of an antiviral state. Cleaves host TICAM1/TRIF, thereby disrupting TLR3 signaling and preventing the establishment of an antiviral state. Functionally, peptide cofactor which forms a non-covalent complex with the N-terminal of NS3 serine protease. The NS3/NS4A complex prevents phosphorylation of host IRF3, thus preventing the establishment of dsRNA induced antiviral state. The NS3/NS4A complex induces host amino acid transporter component SLC3A2, thus contributing to HCV propagation. In terms of biological role, induces a specific membrane alteration that serves as a scaffold for the virus replication complex. This membrane alteration gives rise to the so-called ER-derived membranous web that contains the replication complex. NS4B self-interaction contributes to its function in membranous web formation. Promotes host TRIF protein degradation in a CASP8-dependent manner thereby inhibiting host TLR3-mediated interferon signaling. Disrupts the interaction between STING and TBK1 contributing to the inhibition of interferon signaling. Phosphorylated protein that is indispensable for viral replication and assembly. Both hypo- and hyperphosphorylated states are required for the viral life cycle. The hyperphosphorylated form of NS5A is an inhibitor of viral replication. Involved in RNA-binding and especially in binding to the viral genome. Zinc is essential for RNA-binding. Participates in the viral particle production as a result of its interaction with the mature viral core protein. Its interaction with host VAPB may target the viral replication complex to vesicles. Down-regulates viral IRES translation initiation. Mediates interferon resistance, presumably by interacting with and inhibiting host EIF2AK2/PKR. Prevents BIN1-induced apoptosis. Acts as a transcriptional activator of some host genes important for viral replication when localized in the nucleus. Via the interaction with host PACSIN2, modulates lipid droplet formation in order to promote virion assembly. Modulates TNFRSF21/DR6 signaling pathway for viral propagation. Its function is as follows. RNA-dependent RNA polymerase that performs primer-template recognition and RNA synthesis during viral replication. Initiates RNA transcription/replication at a flavin adenine dinucleotide (FAD), resulting in a 5'- FAD cap on viral RNAs. In this way, recognition of viral 5' RNA by host pattern recognition receptors can be bypassed, thereby evading activation of antiviral pathways. This is Genome polyprotein from Hepatitis C virus genotype 1b (isolate Japanese) (HCV).